The primary structure comprises 539 residues: Glucans biosynthesis protein D (539 aa).

The tat-type signal signal peptide spans Met-1–Ala-29.

It belongs to the OpgD/OpgG family. Post-translationally, predicted to be exported by the Tat system. The position of the signal peptide cleavage has not been experimentally proven.

Its subcellular location is the periplasm. Its pathway is glycan metabolism; osmoregulated periplasmic glucan (OPG) biosynthesis. Probably involved in the control of the structural glucose backbone of osmoregulated periplasmic glucans (OPGs). This Pseudomonas syringae pv. syringae (strain B728a) protein is Glucans biosynthesis protein D.